Reading from the N-terminus, the 315-residue chain is Ribosomal RNA small subunit methyltransferase H (315 aa).

S-adenosyl-L-methionine is bound by residues 37 to 39 (GGH), Asp57, Phe83, Asp105, and Gln112.

This sequence belongs to the methyltransferase superfamily. RsmH family.

It is found in the cytoplasm. The enzyme catalyses cytidine(1402) in 16S rRNA + S-adenosyl-L-methionine = N(4)-methylcytidine(1402) in 16S rRNA + S-adenosyl-L-homocysteine + H(+). In terms of biological role, specifically methylates the N4 position of cytidine in position 1402 (C1402) of 16S rRNA. This is Ribosomal RNA small subunit methyltransferase H from Pseudomonas putida (strain ATCC 700007 / DSM 6899 / JCM 31910 / BCRC 17059 / LMG 24140 / F1).